The primary structure comprises 249 residues: 14-3-3-like protein D (249 aa).

The protein belongs to the 14-3-3 family.

The chain is 14-3-3-like protein D from Nicotiana tabacum (Common tobacco).